The chain runs to 81 residues: Kappa-theraphotoxin-Gr2c (81 aa).

The N-terminal stretch at 1–19 (MKAFFVILGLALLCAYSFA) is a signal peptide. The propeptide occupies 20–50 (LEEQDQLSLRNDLLTVMFAENSELTPETEER). 3 disulfide bridges follow: Cys52–Cys66, Cys59–Cys71, and Cys65–Cys75.

The protein belongs to the neurotoxin 30 (phrixotoxin) family. As to expression, expressed by the venom gland.

It localises to the secreted. In terms of biological role, inhibits sodium channels Nav1.1/SCN1A (IC(50)=5.7 uM), Nav1.2/SCN2A (IC(50)=12 uM), Nav1.4/SCN4A (IC(50)=4 uM), Nav1.6/SCN8A (IC(50)=6.6 uM), Nav1.7/SCN9A (IC(50)=13.6-1030 nM), potassium channels Kv11.1/KCNH2 (IC(50)=4.7 uM), as well as high-voltage-gated calcium channels Cav1.2/CACNA1C (IC(50)= nM). Also blocks mechanosensitive ion channels (also named stretch-activated channels or SACs) and the hypotonic cell swelling induced calcium increase associated with the activation of such channels. It can thus be useful in treating cardiac ventricular disturbances. Also induces analgesia in mammals. The sequence is that of Kappa-theraphotoxin-Gr2c from Grammostola rosea (Chilean rose tarantula).